The chain runs to 549 residues: Glucose-6-phosphate isomerase (549 aa).

N6-acetyllysine is present on residues Lys80, Lys228, and Lys234. Catalysis depends on Glu355, which acts as the Proton donor. Residues His386 and Lys514 contribute to the active site.

The protein belongs to the GPI family.

It is found in the cytoplasm. The catalysed reaction is alpha-D-glucose 6-phosphate = beta-D-fructose 6-phosphate. The protein operates within carbohydrate biosynthesis; gluconeogenesis. Its pathway is carbohydrate degradation; glycolysis; D-glyceraldehyde 3-phosphate and glycerone phosphate from D-glucose: step 2/4. In terms of biological role, catalyzes the reversible isomerization of glucose-6-phosphate to fructose-6-phosphate. The polypeptide is Glucose-6-phosphate isomerase (Escherichia fergusonii (strain ATCC 35469 / DSM 13698 / CCUG 18766 / IAM 14443 / JCM 21226 / LMG 7866 / NBRC 102419 / NCTC 12128 / CDC 0568-73)).